Reading from the N-terminus, the 374-residue chain is Aminomethyltransferase (374 aa).

It belongs to the GcvT family. As to quaternary structure, the glycine cleavage system is composed of four proteins: P, T, L and H.

The enzyme catalyses N(6)-[(R)-S(8)-aminomethyldihydrolipoyl]-L-lysyl-[protein] + (6S)-5,6,7,8-tetrahydrofolate = N(6)-[(R)-dihydrolipoyl]-L-lysyl-[protein] + (6R)-5,10-methylene-5,6,7,8-tetrahydrofolate + NH4(+). Functionally, the glycine cleavage system catalyzes the degradation of glycine. This chain is Aminomethyltransferase, found in Prochlorococcus marinus (strain MIT 9313).